The chain runs to 176 residues: V-type proton ATPase 16 kDa proteolipid subunit (176 aa).

At 1–17 the chain is on the lumenal side; that stretch reads MSVLLRSVTELCPVYSP. Residues 18–38 form a helical membrane-spanning segment; the sequence is FFGSMGITASIVFTVFGGAYG. The Cytoplasmic portion of the chain corresponds to 39–62; the sequence is TAKSSVGISSVGVMKPEFIMRSLF. Residues 63 to 83 traverse the membrane as a helical segment; it reads PVVFAGVIGLYGLIVCIVLFI. The Lumenal portion of the chain corresponds to 84 to 98; it reads NVNKSEYSLNRAFLD. The chain crosses the membrane as a helical span at residues 99 to 119; that stretch reads LGAGLTCGLCGLASGMSIGIS. Over 120 to 136 the chain is Cytoplasmic; that stretch reads GDCGVRGAAQQPKLFVS. Residues 137-157 form a helical membrane-spanning segment; it reads MLICLIFSEALALYGFIVALI. Over 158 to 176 the chain is Lumenal; that stretch reads MAATGDNSCVATASTSSSS.

Belongs to the V-ATPase proteolipid subunit family. As to quaternary structure, V-ATPase is a heteromultimeric enzyme composed of a peripheral catalytic V1 complex (main components: subunits A, B, C, D, E, and F) attached to an integral membrane V0 proton pore complex (main component: the proteolipid protein; which is present as a hexamer that forms the proton-conducting pore).

It is found in the vacuole membrane. Functionally, proton-conducting pore forming subunit of the membrane integral V0 complex of vacuolar ATPase. V-ATPase is responsible for acidifying a variety of intracellular compartments in eukaryotic cells. In Entamoeba dispar, this protein is V-type proton ATPase 16 kDa proteolipid subunit (VMA3).